Here is a 785-residue protein sequence, read N- to C-terminus: MRVSFNWLQEYVEFDFTPSELAEKLTMAGFEVEHVEDRRTWAAGVVVGRVLECAPHPQADRLHVCRVDIGTGRLLNIVCGAPNARAGIYAPVAPVGTYLPIKDLKLRAASIRGMPSEGMLCSLEELGLEKASEGIHIFPEASLPLGLDVGPLLGLDDAILEVASTANRADALSMVGIAREVAALTGGILRLPLVDAPLVPRGDLAARIAEPEACPVYTATLLEEVAVGPAPDWLRERLEKAGMRPINNVVDVTNYVLLEWGQPLHAFDADRLAAGTLGVRFAHKGEQLVTLDGTERPLTPANLLITAGERPVALAGVMGGEATEVGGQTRRIVLEAAIFDPPAIRRSARVFALRTEASARYERGVDASALEHALGRALQLLADCAGARAVVQATDDYRRRENRVVSLRPERLAQILGEDIPDAEIARVLKNLGFDVQTGPQEFAVTVPGHRLRDIEREIDLIEEVARVVGYDRFAPTLPPPADGGYLPFEDFIERRVRSLCQGAGLTEVVTYSLAPDRDQQPVVLSNPLSAELNSLRTNLIDGLLEILRFNRSQGNMPFHAFEVGVVFLRSDEGIFESGRLGAVMCGEPAVGDWQKLTPPFDWFAAKGVLAAILQPWQIEVEYQADRRDERLHPGRTASLWVSGERLGTLGQLHPRLASRLDLPEQTFVFEIDLDFLIDLVRERPVEFRSFSPFPPAARDLSFYAREALTVFEFERLIREQGEPLLESVALLDEFKGQGVPEGCRSLAFRMVYRSDHTLTEEEITAVHQRVRQALAERYSVDLRS.

The tRNA-binding domain maps to 39–150 (RTWAAGVVVG…ASLPLGLDVG (112 aa)). Residues 400 to 476 (RENRVVSLRP…RVVGYDRFAP (77 aa)) form the B5 domain. 4 residues coordinate Mg(2+): Asp454, Asp460, Glu463, and Glu464. One can recognise an FDX-ACB domain in the interval 692–784 (SPFPPAARDL…LAERYSVDLR (93 aa)).

The protein belongs to the phenylalanyl-tRNA synthetase beta subunit family. Type 1 subfamily. Tetramer of two alpha and two beta subunits. Mg(2+) serves as cofactor.

It localises to the cytoplasm. The enzyme catalyses tRNA(Phe) + L-phenylalanine + ATP = L-phenylalanyl-tRNA(Phe) + AMP + diphosphate + H(+). The sequence is that of Phenylalanine--tRNA ligase beta subunit from Gloeobacter violaceus (strain ATCC 29082 / PCC 7421).